The sequence spans 144 residues: Cell division protein SepF (144 aa).

This sequence belongs to the SepF family. In terms of assembly, homodimer. Interacts with FtsZ.

Its subcellular location is the cytoplasm. Functionally, cell division protein that is part of the divisome complex and is recruited early to the Z-ring. Probably stimulates Z-ring formation, perhaps through the cross-linking of FtsZ protofilaments. Its function overlaps with FtsA. This chain is Cell division protein SepF, found in Oceanobacillus iheyensis (strain DSM 14371 / CIP 107618 / JCM 11309 / KCTC 3954 / HTE831).